A 910-amino-acid polypeptide reads, in one-letter code: Eukaryotic translation initiation factor 3 subunit C (910 aa).

Positions 1-21 (MSRFFANGSESESESSEEEIQ) are disordered. Residues 11–20 (SESESSEEEI) show a composition bias toward acidic residues. A phosphoserine mark is found at Ser-34, Ser-165, Ser-176, and Ser-185. Positions 157–281 (FREAPDQESE…KRAEDDEDGE (125 aa)) are disordered. Acidic residues predominate over residues 162 to 186 (DQESEAEDEVVALESDGGDAGDDSD). Over residues 193–207 (EAAPKAVKSAPAKAA) the composition is skewed to low complexity. Positions 209–235 (ADDDDSDDSIDWDSDSESETESSDDEN) are enriched in acidic residues. Residues 240-268 (MRERFLKRTTEKEEKDDDKRKDKRKEQKT) show a composition bias toward basic and acidic residues. The region spanning 639-815 (FHMHINLELL…ETVGMHRSEP (177 aa)) is the PCI domain. The disordered stretch occupies residues 847 to 910 (FFQRGNMGNR…QQQVQTIDEE (64 aa)). Positions 862 to 874 (NRNQNNQGGNWLG) are enriched in low complexity. Over residues 882–891 (RNRNQRGHHK) the composition is skewed to basic residues. Positions 895–910 (DRQQQQQQQVQTIDEE) are enriched in low complexity.

This sequence belongs to the eIF-3 subunit C family. As to quaternary structure, component of the eukaryotic translation initiation factor 3 (eIF-3) complex. The eIF-3 complex interacts with pix.

The protein resides in the cytoplasm. Functionally, component of the eukaryotic translation initiation factor 3 (eIF-3) complex, which is involved in protein synthesis of a specialized repertoire of mRNAs and, together with other initiation factors, stimulates binding of mRNA and methionyl-tRNAi to the 40S ribosome. The eIF-3 complex specifically targets and initiates translation of a subset of mRNAs involved in cell proliferation. The sequence is that of Eukaryotic translation initiation factor 3 subunit C from Drosophila sechellia (Fruit fly).